A 527-amino-acid polypeptide reads, in one-letter code: Peptide chain release factor 3 (527 aa).

Residues 10 to 278 enclose the tr-type G domain; sequence DRRRTFAIIS…TFVENAPAPL (269 aa). Residues 19–26, 87–91, and 141–144 each bind GTP; these read SHPDAGKT, DTPGH, and NKLD.

This sequence belongs to the TRAFAC class translation factor GTPase superfamily. Classic translation factor GTPase family. PrfC subfamily.

Its subcellular location is the cytoplasm. Its function is as follows. Increases the formation of ribosomal termination complexes and stimulates activities of RF-1 and RF-2. It binds guanine nucleotides and has strong preference for UGA stop codons. It may interact directly with the ribosome. The stimulation of RF-1 and RF-2 is significantly reduced by GTP and GDP, but not by GMP. This Geobacter metallireducens (strain ATCC 53774 / DSM 7210 / GS-15) protein is Peptide chain release factor 3.